The chain runs to 200 residues: Ras-related protein Rab-10 (200 aa).

GTP-binding residues include serine 18, glycine 19, valine 20, glycine 21, lysine 22, threonine 23, cysteine 24, asparagine 35, threonine 36, serine 40, and threonine 41. Mg(2+) is bound at residue threonine 23. Short sequence motifs (switch) lie at residues 32–46 (DAFN…GIDF) and 64–81 (DTAG…YYRG). Mg(2+) is bound by residues threonine 41 and aspartate 64. Glycine 67 is a binding site for GTP. Phosphothreonine; by LRRK2 is present on threonine 73. N6-acetyllysine is present on lysine 102. Lysine 102 participates in a covalent cross-link: Glycyl lysine isopeptide (Lys-Gly) (interchain with G-Cter in ubiquitin). Residues asparagine 122, lysine 123, aspartate 125, and methionine 126 each contribute to the GTP site. Residue lysine 136 forms a Glycyl lysine isopeptide (Lys-Gly) (interchain with G-Cter in ubiquitin) linkage. GTP is bound by residues serine 152, alanine 153, and lysine 154. A Glycyl lysine isopeptide (Lys-Gly) (interchain with G-Cter in ubiquitin) cross-link involves residue lysine 154. S-geranylgeranyl cysteine attachment occurs at residues cysteine 199 and cysteine 200.

It belongs to the small GTPase superfamily. Rab family. In terms of assembly, interacts with MYO5A; mediates the transport to the plasma membrane of SLC2A4/GLUT4 storage vesicles. Interacts with GDI1 and with GDI2; negatively regulates RAB10 association with membranes and activation. Interacts (GDP-bound form) with LLGL1; the interaction is direct and promotes RAB10 association with membranes and activation through competition with the Rab inhibitor GDI1. Interacts with EXOC4; probably associates with the exocyst. Interacts (GTP-bound form) with MICALCL, MICAL1, MICAL3, EHBP1 and EHBP1L1; at least in case of MICAL1 two molecules of RAB10 can bind to one molecule of MICAL1. Interacts with TBC1D13. Interacts with SEC16A. Interacts with CHM and CHML. Interacts with LRRK2; interaction facilitates phosphorylation of Thr-73. Interacts (when phosphorylated on Thr-73) with RILPL1 and RILPL2. Interacts with TBC1D21. Interacts with MARCKS. Requires Mg(2+) as cofactor. Post-translationally, ubiquitinated upon Legionella pneumophila infection. Ubiquitination does not lead to proteasomal degradation. In terms of processing, phosphorylation of Thr-73 in the switch II region by LRRK2 prevents the association of dRAB regulatory proteins, including CHM, CHML and RAB GDP dissociation inhibitors GDI1 and GDI2. Phosphorylation of Thr-73 by LRRK2 is stimulated by RAB29 and RAB32. Phosphorylation by LRRK2 is required for localization to stressed lysosomes. As to expression, expressed in the hippocampus. Expressed in neutrophils (at protein level). Expressed in the testis (at protein level).

It is found in the cytoplasmic vesicle membrane. Its subcellular location is the golgi apparatus membrane. The protein localises to the golgi apparatus. The protein resides in the trans-Golgi network membrane. It localises to the endosome membrane. It is found in the recycling endosome membrane. Its subcellular location is the cytoplasmic vesicle. The protein localises to the phagosome membrane. The protein resides in the cytoplasm. It localises to the cytoskeleton. It is found in the cilium basal body. Its subcellular location is the endoplasmic reticulum membrane. The protein localises to the perinuclear region. The protein resides in the lysosome. It carries out the reaction GTP + H2O = GDP + phosphate + H(+). With respect to regulation, regulated by guanine nucleotide exchange factors (GEFs) DENND4C and RABIF which promote the exchange of bound GDP for free GTP. Regulated by GTPase activating proteins (GAPs) including TBC1D21 which increase the GTP hydrolysis activity. Inhibited by GDP dissociation inhibitors GDI1 and GDI2 which prevent Rab-GDP dissociation. In terms of biological role, the small GTPases Rab are key regulators of intracellular membrane trafficking, from the formation of transport vesicles to their fusion with membranes. Rabs cycle between an inactive GDP-bound form and an active GTP-bound form that is able to recruit to membranes different set of downstream effectors directly responsible for vesicle formation, movement, tethering and fusion. That Rab is mainly involved in the biosynthetic transport of proteins from the Golgi to the plasma membrane. Regulates, for instance, SLC2A4/GLUT4 glucose transporter-enriched vesicles delivery to the plasma membrane. In parallel, it regulates the transport of TLR4, a toll-like receptor to the plasma membrane and therefore may be important for innate immune response. Also plays a specific role in asymmetric protein transport to the plasma membrane. In neurons, it is involved in axonogenesis through regulation of vesicular membrane trafficking toward the axonal plasma membrane. In epithelial cells, it regulates transport from the Golgi to the basolateral membrane. May play a role in the basolateral recycling pathway and in phagosome maturation. May play a role in endoplasmic reticulum dynamics and morphology controlling tubulation along microtubules and tubules fusion. Together with LRRK2, RAB8A, and RILPL1, it regulates ciliogenesis. When phosphorylated by LRRK2 on Thr-73, binds RILPL1 and inhibits ciliogenesis. Participates in the export of a subset of neosynthesized proteins through a Rab8-Rab10-Rab11-dependent endososomal export route. Targeted to and stabilized on stressed lysosomes through LRRK2 phosphorylation where it promotes the extracellular release of lysosomal content through EHBP1 and EHNP1L1 effector proteins. Functionally, (Microbial infection) Upon Legionella pneumophila infection promotes endoplasmic reticulum recruitment and bacterial replication. Plays a role in remodeling the Legionella-containing vacuole (LCV) into an endoplasmic reticulum-like vacuole. The polypeptide is Ras-related protein Rab-10 (Homo sapiens (Human)).